We begin with the raw amino-acid sequence, 189 residues long: Acireductone dioxygenase 1 (189 aa).

Fe(2+) is bound by residues His102, His104, Glu108, and His146. The Ni(2+) site is built by His102, His104, Glu108, and His146.

The protein belongs to the acireductone dioxygenase (ARD) family. As to quaternary structure, monomer. Requires Fe(2+) as cofactor. Ni(2+) is required as a cofactor.

The enzyme catalyses 1,2-dihydroxy-5-(methylsulfanyl)pent-1-en-3-one + O2 = 3-(methylsulfanyl)propanoate + CO + formate + 2 H(+). It catalyses the reaction 1,2-dihydroxy-5-(methylsulfanyl)pent-1-en-3-one + O2 = 4-methylsulfanyl-2-oxobutanoate + formate + 2 H(+). Its pathway is amino-acid biosynthesis; L-methionine biosynthesis via salvage pathway; L-methionine from S-methyl-5-thio-alpha-D-ribose 1-phosphate: step 5/6. Its function is as follows. Catalyzes 2 different reactions between oxygen and the acireductone 1,2-dihydroxy-3-keto-5-methylthiopentene (DHK-MTPene) depending upon the metal bound in the active site. Fe-containing acireductone dioxygenase (Fe-ARD) produces formate and 2-keto-4-methylthiobutyrate (KMTB), the alpha-ketoacid precursor of methionine in the methionine recycle pathway. Ni-containing acireductone dioxygenase (Ni-ARD) produces methylthiopropionate, carbon monoxide and formate, and does not lie on the methionine recycle pathway. In Nocardia farcinica (strain IFM 10152), this protein is Acireductone dioxygenase 1.